A 232-amino-acid chain; its full sequence is Histone H1B (232 aa).

Residues 1 to 18 (MSDPAVEVTPAVPVASPA) show a composition bias toward low complexity. Disordered stretches follow at residues 1-44 (MSDP…PPVS) and 99-232 (QTKG…AKKA). The region spanning 39–113 (THPPVSEMVV…GASGSFKLPA (75 aa)) is the H15 domain. 5 stretches are compositionally biased toward basic residues: residues 132-141 (KPKKAAAKPK), 147-173 (KVKK…KTTK), 181-197 (AAKK…KPKA), 205-214 (KRAAAPKAKK), and 222-232 (KAAKKPAAKKA).

The protein belongs to the histone H1/H5 family.

It localises to the nucleus. Its subcellular location is the chromosome. Functionally, histones H1 are necessary for the condensation of nucleosome chains into higher-order structures. The sequence is that of Histone H1B from Chironomus tentans (Midge).